The following is a 218-amino-acid chain: Alkylmercury lyase (218 aa).

The protein belongs to the MerB family.

The catalysed reaction is an alkylmercury + H(+) = an alkane + Hg(2+). Functionally, cleaves the carbon-mercury bond of organomercurials such as phenylmercuric acetate. One product is Hg(2+), which is subsequently detoxified by the mercuric reductase. The sequence is that of Alkylmercury lyase from Clostridium butyricum.